The sequence spans 379 residues: Queuine tRNA-ribosyltransferase (379 aa).

Catalysis depends on D91, which acts as the Proton acceptor. Residues 91–95, D145, Q189, and G216 contribute to the substrate site; that span reads DSGGF. The interval 247–253 is RNA binding; the sequence is GVGKPED. D266 functions as the Nucleophile in the catalytic mechanism. The segment at 271 to 275 is RNA binding; important for wobble base 34 recognition; it reads TRNAR. Positions 304, 306, 309, and 335 each coordinate Zn(2+).

The protein belongs to the queuine tRNA-ribosyltransferase family. Homodimer. Within each dimer, one monomer is responsible for RNA recognition and catalysis, while the other monomer binds to the replacement base PreQ1. Requires Zn(2+) as cofactor.

It catalyses the reaction 7-aminomethyl-7-carbaguanine + guanosine(34) in tRNA = 7-aminomethyl-7-carbaguanosine(34) in tRNA + guanine. It participates in tRNA modification; tRNA-queuosine biosynthesis. Its function is as follows. Catalyzes the base-exchange of a guanine (G) residue with the queuine precursor 7-aminomethyl-7-deazaguanine (PreQ1) at position 34 (anticodon wobble position) in tRNAs with GU(N) anticodons (tRNA-Asp, -Asn, -His and -Tyr). Catalysis occurs through a double-displacement mechanism. The nucleophile active site attacks the C1' of nucleotide 34 to detach the guanine base from the RNA, forming a covalent enzyme-RNA intermediate. The proton acceptor active site deprotonates the incoming PreQ1, allowing a nucleophilic attack on the C1' of the ribose to form the product. After dissociation, two additional enzymatic reactions on the tRNA convert PreQ1 to queuine (Q), resulting in the hypermodified nucleoside queuosine (7-(((4,5-cis-dihydroxy-2-cyclopenten-1-yl)amino)methyl)-7-deazaguanosine). The sequence is that of Queuine tRNA-ribosyltransferase from Vibrio cholerae serotype O1 (strain ATCC 39315 / El Tor Inaba N16961).